Consider the following 154-residue polypeptide: 17 kDa surface antigen (154 aa).

Residues 1-19 form the signal peptide; the sequence is MKLLSKIMIIALAASMLQA. A lipid anchor (N-palmitoyl cysteine) is attached at C20. C20 carries the S-diacylglycerol cysteine lipid modification.

It belongs to the rickettsiale 17 kDa surface antigen family.

The protein localises to the cell outer membrane. The chain is 17 kDa surface antigen (omp) from Rickettsia rhipicephali.